Here is a 224-residue protein sequence, read N- to C-terminus: Putative endoglucanase X (224 aa).

The interval 147 to 168 (QTQPTPSPSPTPTDSPLVKKGD) is disordered. The 63-residue stretch at 162-224 (PLVKKGDVNL…SILKRILLRN (63 aa)) folds into the Dockerin domain.

It catalyses the reaction Endohydrolysis of (1-&gt;4)-beta-D-glucosidic linkages in cellulose, lichenin and cereal beta-D-glucans.. In terms of biological role, this enzyme catalyzes the endohydrolysis of 1,4-beta-glucosidic linkages in cellulose, lichenin and cereal beta-D-glucans. This is Putative endoglucanase X (celX) from Acetivibrio thermocellus (Hungateiclostridium thermocellum).